The chain runs to 432 residues: Putative transposase A625R (432 aa).

Residues Cys375, Cys378, Cys393, and Cys395 each coordinate Zn(2+).

The protein in the N-terminal section; belongs to the transposase 2 family. In the C-terminal section; belongs to the transposase 35 family.

This chain is Putative transposase A625R, found in Chlorella (PBCV-1).